Consider the following 954-residue polypeptide: Valine--tRNA ligase (954 aa).

Positions 48–58 match the 'HIGH' region motif; sequence PNVTGSLHMGH. The 'KMSKS' region signature appears at 560 to 564; that stretch reads KMSKS. Residue K563 coordinates ATP. Positions 883–954 form a coiled coil; it reads AGFINKEAEL…QTQYQAIENL (72 aa).

This sequence belongs to the class-I aminoacyl-tRNA synthetase family. ValS type 1 subfamily. As to quaternary structure, monomer.

It localises to the cytoplasm. It catalyses the reaction tRNA(Val) + L-valine + ATP = L-valyl-tRNA(Val) + AMP + diphosphate. In terms of biological role, catalyzes the attachment of valine to tRNA(Val). As ValRS can inadvertently accommodate and process structurally similar amino acids such as threonine, to avoid such errors, it has a 'posttransfer' editing activity that hydrolyzes mischarged Thr-tRNA(Val) in a tRNA-dependent manner. This is Valine--tRNA ligase from Actinobacillus pleuropneumoniae serotype 5b (strain L20).